The chain runs to 152 residues: Neuropeptide W (152 aa).

The signal sequence occupies residues 1–32; it reads MGARGPGPGATARRRLLALLLLLLLLPLPARA. The propeptide occupies 65-152; that stretch reads ALRPAAGPLA…LGASSWTSAE (88 aa). 2 disordered regions span residues 79-108 and 122-152; these read GQDV…LPPG and SGIP…TSAE. Residues 96-106 show a composition bias toward pro residues; it reads GPAPRDAPLLP.

This sequence belongs to the neuropeptide B/W family.

It is found in the secreted. Functionally, plays a regulatory role in the organization of neuroendocrine signals accessing the anterior pituitary gland. Stimulates water drinking and food intake. May play a role in the hypothalamic response to stress. The polypeptide is Neuropeptide W (NPW) (Sus scrofa (Pig)).